The sequence spans 630 residues: ATP-dependent zinc metalloprotease FtsH (630 aa).

The Cytoplasmic segment spans residues 1–7 (MNNFMKN). A helical membrane pass occupies residues 8–28 (IGFYLVLIALSILVAQFFVDT). At 29–111 (DVNTIVDTDV…KTEPEPTAPW (83 aa)) the chain is on the periplasmic side. The chain crosses the membrane as a helical span at residues 112–132 (WTGMLAYILPIILLIGAWFFI). Residues 133–630 (MQRMQGGGSQ…ENREHENNDK (498 aa)) are Cytoplasmic-facing. 203-210 (GPPGTGKT) provides a ligand contact to ATP. Position 425 (His425) interacts with Zn(2+). Glu426 is an active-site residue. Residues His429 and Asp501 each coordinate Zn(2+). The disordered stretch occupies residues 601 to 630 (KLIKGEPLDDDSIDNSTDENENREHENNDK). Positions 608–619 (LDDDSIDNSTDE) are enriched in acidic residues. The segment covering 620–630 (NENREHENNDK) has biased composition (basic and acidic residues).

In the central section; belongs to the AAA ATPase family. It in the C-terminal section; belongs to the peptidase M41 family. Homohexamer. It depends on Zn(2+) as a cofactor.

Its subcellular location is the cell inner membrane. Functionally, acts as a processive, ATP-dependent zinc metallopeptidase for both cytoplasmic and membrane proteins. Plays a role in the quality control of integral membrane proteins. The polypeptide is ATP-dependent zinc metalloprotease FtsH (Halothermothrix orenii (strain H 168 / OCM 544 / DSM 9562)).